Consider the following 312-residue polypeptide: Putative clathrin assembly protein At2g01920 (312 aa).

One can recognise an ENTH domain in the interval 21–152 (LITATDEKFT…ILYYNKNMIR (132 aa)).

The protein resides in the membrane. Its subcellular location is the clathrin-coated pit. The protein localises to the golgi apparatus. It is found in the cytoplasmic vesicle. It localises to the clathrin-coated vesicle. The protein is Putative clathrin assembly protein At2g01920 of Arabidopsis thaliana (Mouse-ear cress).